Here is a 444-residue protein sequence, read N- to C-terminus: Phosphoglucosamine mutase (444 aa).

The active-site Phosphoserine intermediate is serine 104. Mg(2+)-binding residues include serine 104, aspartate 243, aspartate 245, and aspartate 247. At serine 104 the chain carries Phosphoserine.

Belongs to the phosphohexose mutase family. Mg(2+) serves as cofactor. Activated by phosphorylation.

The catalysed reaction is alpha-D-glucosamine 1-phosphate = D-glucosamine 6-phosphate. In terms of biological role, catalyzes the conversion of glucosamine-6-phosphate to glucosamine-1-phosphate. This chain is Phosphoglucosamine mutase, found in Neisseria meningitidis serogroup B (strain ATCC BAA-335 / MC58).